A 517-amino-acid polypeptide reads, in one-letter code: ATP synthase subunit alpha (517 aa).

An ATP-binding site is contributed by 173 to 180 (GDRQTGKT).

The protein belongs to the ATPase alpha/beta chains family. F-type ATPases have 2 components, CF(1) - the catalytic core - and CF(0) - the membrane proton channel. CF(1) has five subunits: alpha(3), beta(3), gamma(1), delta(1), epsilon(1). CF(0) has three main subunits: a(1), b(2) and c(9-12). The alpha and beta chains form an alternating ring which encloses part of the gamma chain. CF(1) is attached to CF(0) by a central stalk formed by the gamma and epsilon chains, while a peripheral stalk is formed by the delta and b chains.

The protein resides in the cell inner membrane. It catalyses the reaction ATP + H2O + 4 H(+)(in) = ADP + phosphate + 5 H(+)(out). Produces ATP from ADP in the presence of a proton gradient across the membrane. The alpha chain is a regulatory subunit. The protein is ATP synthase subunit alpha of Legionella pneumophila (strain Lens).